The chain runs to 340 residues: GTP 3',8-cyclase (340 aa).

Residues 8-229 (KLGRPIRDLR…IEQHFEISPV (222 aa)) form the Radical SAM core domain. Arg-17 is a GTP binding site. Residues Cys-24 and Cys-28 each contribute to the [4Fe-4S] cluster site. Tyr-30 serves as a coordination point for S-adenosyl-L-methionine. Residue Cys-31 participates in [4Fe-4S] cluster binding. Arg-71 contributes to the GTP binding site. Residue Gly-75 participates in S-adenosyl-L-methionine binding. Residue Thr-102 coordinates GTP. Residue Ser-126 coordinates S-adenosyl-L-methionine. GTP is bound at residue Lys-163. Met-197 serves as a coordination point for S-adenosyl-L-methionine. [4Fe-4S] cluster-binding residues include Cys-261 and Cys-264. 266 to 268 (RAR) serves as a coordination point for GTP. [4Fe-4S] cluster is bound at residue Cys-278.

It belongs to the radical SAM superfamily. MoaA family. As to quaternary structure, monomer and homodimer. [4Fe-4S] cluster serves as cofactor.

It catalyses the reaction GTP + AH2 + S-adenosyl-L-methionine = (8S)-3',8-cyclo-7,8-dihydroguanosine 5'-triphosphate + 5'-deoxyadenosine + L-methionine + A + H(+). The protein operates within cofactor biosynthesis; molybdopterin biosynthesis. In terms of biological role, catalyzes the cyclization of GTP to (8S)-3',8-cyclo-7,8-dihydroguanosine 5'-triphosphate. In Staphylococcus epidermidis (strain ATCC 35984 / DSM 28319 / BCRC 17069 / CCUG 31568 / BM 3577 / RP62A), this protein is GTP 3',8-cyclase.